The chain runs to 238 residues: Probable transcriptional regulatory protein HH_1604 (238 aa).

It belongs to the TACO1 family.

It localises to the cytoplasm. The protein is Probable transcriptional regulatory protein HH_1604 of Helicobacter hepaticus (strain ATCC 51449 / 3B1).